The sequence spans 391 residues: Cathepsin E (391 aa).

The N-terminal stretch at methionine 1 to glycine 19 is a signal peptide. The propeptide at alanine 20–methionine 53 is activation peptide. The 314-residue stretch at tyrosine 74–alanine 387 folds into the Peptidase A1 domain. Residue asparagine 86 is glycosylated (N-linked (GlcNAc...) asparagine). The active site involves aspartate 92. 2 cysteine pairs are disulfide-bonded: cysteine 105-cysteine 110 and cysteine 267-cysteine 271. Residue aspartate 276 is part of the active site. Cysteine 309 and cysteine 346 are disulfide-bonded.

Belongs to the peptidase A1 family. Homodimer; disulfide-linked. In terms of processing, glycosylated. The nature of the carbohydrate chain varies between cell types. Expressed abundantly in the surface and foveolar epithelial cells of the fundic and pyloric stomach mucosa, and at very low levels in the spleen.

Its subcellular location is the endosome. The enzyme catalyses Similar to cathepsin D, but slightly broader specificity.. Functionally, may have a role in immune function. Probably involved in the processing of antigenic peptides during MHC class II-mediated antigen presentation. May play a role in activation-induced lymphocyte depletion in the thymus, and in neuronal degeneration and glial cell activation in the brain. The chain is Cathepsin E (CTSE) from Cavia porcellus (Guinea pig).